The following is an 843-amino-acid chain: Speckle targeted PIP5K1A-regulated poly(A) polymerase (843 aa).

The Matrin-type zinc-finger motif lies at 25-55 (FRCLLCGVNIPNRPSLTDHLSGRRHVRLHEE). The RRM domain maps to 54 to 126 (EERDKRNQQQ…ALEEPQIKLS (73 aa)). A compositionally biased stretch (basic residues) spans 134–146 (PREKKEFQRKKGG). Positions 134 to 157 (PREKKEFQRKKGGSPRTLQPPDPE) are disordered. Residue Ser215 participates in ATP binding. The Mg(2+) site is built by Asp226 and Asp228. 2 residues coordinate UTP: Asp226 and Asp228. Residues 241–255 (VEGKAEKEIQNREES) show a composition bias toward basic and acidic residues. A disordered region spans residues 241 to 292 (VEGKAEKEIQNREESSTDMEVSMEDPETERKEEEMEIGNSKNDEDEDVTPGL). Residue Asn354 participates in ATP binding. UTP is bound by residues Asn354, Arg376, Tyr398, and His516. In terms of domain architecture, PAP-associated spans 456–516 (SLSSLLSEFF…NIQDPFELSH (61 aa)). Positions 564–837 (PPTERECVGR…YLPRMVAQIQ (274 aa)) are KA1; binds the bulging loops of U6 snRNA but is dispensable for terminal uridylyltransferase activity. A disordered region spans residues 653–691 (QNNTKEASKQKSIFKTEEGMTESARRKREMTEPCMSDMT). A compositionally biased stretch (basic and acidic residues) spans 658 to 670 (EASKQKSIFKTEE).

Belongs to the DNA polymerase type-B-like family. Associates with the cleavage and polyadenylation specificity factor (CPSF) complex. Requires Mg(2+) as cofactor. It depends on Mn(2+) as a cofactor.

It localises to the nucleus. It is found in the nucleolus. The protein localises to the nucleus speckle. The enzyme catalyses RNA(n) + UTP = RNA(n)-3'-uridine ribonucleotide + diphosphate. It catalyses the reaction RNA(n) + ATP = RNA(n)-3'-adenine ribonucleotide + diphosphate. Functionally, poly(A) polymerase that creates the 3'-poly(A) tail of specific pre-mRNAs. In addition to polyadenylation, it is also required for the 3'-end cleavage of pre-mRNAs: binds to the 3'UTR of targeted pre-mRNAs and promotes the recruitment and assembly of the CPSF complex on the 3'UTR of pre-mRNAs. In addition to adenylyltransferase activity, also has uridylyltransferase activity. However, the ATP ratio is higher than UTP in cells, suggesting that it functions primarily as a poly(A) polymerase. The protein is Speckle targeted PIP5K1A-regulated poly(A) polymerase (tut1) of Xenopus tropicalis (Western clawed frog).